We begin with the raw amino-acid sequence, 1813 residues long: Sucrase-isomaltase, intestinal (1813 aa).

Over 1 to 12 (MARKKSSGLKIT) the chain is Cytoplasmic. Ser7 is modified (phosphoserine; by PKA). The helical; Signal-anchor for type II membrane protein transmembrane segment at 13 to 32 (LIVLLAIVTIIAIALVAILP) threads the bilayer. Residues 33–1813 (TKTPAVELVS…LDEPIEISWT (1781 aa)) are Lumenal-facing. One can recognise a P-type 1 domain in the interval 46 to 95 (GKCPSAENDRLDEKINCIPDQFPTQALCAMQGCCWNPRNESPTPWCSFAN). 3 disulfides stabilise this stretch: Cys48-Cys79, Cys62-Cys78, and Cys73-Cys91. Residues 95–991 (NNHGYEFEKI…DLELNTATAR (897 aa)) are isomaltase. The N-linked (GlcNAc...) asparagine glycan is linked to Asn127. The substrate site is built by Asp250 and Asp374. Sulfotyrosine is present on Tyr377. A glycan (N-linked (GlcNAc...) asparagine) is linked at Asn388. Residue Asp491 is the Nucleophile; for isomaltase activity of the active site. Cysteines 506 and 531 form a disulfide. Arg574 lines the substrate pocket. Asp590 (for isomaltase activity) is an active-site residue. The cysteines at positions 621 and 632 are disulfide-linked. His648 contacts substrate. 4 N-linked (GlcNAc...) asparagine glycosylation sites follow: Asn669, Asn791, Asn896, and Asn911. Positions 917–962 (NQVSLDSEKIDCFPDNNPENKQNCEERGCLWEPNSAAEGPRCYFPK) constitute a P-type 2 domain. Residues 992 to 1813 (IKMPSNPISV…LDEPIEISWT (822 aa)) form a sucrase region. Residues Asn1221 and Asn1289 are each glycosylated (N-linked (GlcNAc...) asparagine). Tyr1294 carries the post-translational modification Sulfotyrosine. 2 N-linked (GlcNAc...) asparagine glycosylation sites follow: Asn1326 and Asn1340. Residues Tyr1368 and Tyr1371 each carry the sulfotyrosine modification. Residue Asp1380 is the Nucleophile; for sucrase activity of the active site. The active-site For sucrase activity is Glu1383. An N-linked (GlcNAc...) asparagine glycan is attached at Asn1432. Asp1486 functions as the Proton donor; for sucrase activity in the catalytic mechanism. Residues Asn1521, Asn1545, Asn1558, Asn1703, and Asn1772 are each glycosylated (N-linked (GlcNAc...) asparagine).

The protein belongs to the glycosyl hydrolase 31 family. The resulting sucrase and isomaltase subunits stay associated with one another in a complex by non-covalent linkages. The precursor is proteolytically cleaved when exposed to pancreatic proteases in the intestinal lumen. Post-translationally, sulfated.

It localises to the apical cell membrane. The catalysed reaction is Hydrolysis of sucrose and maltose by an alpha-D-glucosidase-type action.. The enzyme catalyses Hydrolysis of (1-&gt;6)-alpha-D-glucosidic linkages in some oligosaccharides produced from starch and glycogen by alpha-amylase, and in isomaltose.. Its function is as follows. Plays an important role in the final stage of carbohydrate digestion. Isomaltase activity is specific for both alpha-1,4- and alpha-1,6-oligosaccharides. This is Sucrase-isomaltase, intestinal (SI) from Suncus murinus (Asian house shrew).